The sequence spans 552 residues: Urocanate hydratase (552 aa).

NAD(+)-binding positions include 49–50 (GG), Gln127, 173–175 (GMG), Asp193, 239–240 (NA), 260–264 (QTSAH), 270–271 (YI), and Tyr319. Residue Cys407 is part of the active site. Gly489 serves as a coordination point for NAD(+).

Belongs to the urocanase family. The cofactor is NAD(+).

It localises to the cytoplasm. The catalysed reaction is 4-imidazolone-5-propanoate = trans-urocanate + H2O. The protein operates within amino-acid degradation; L-histidine degradation into L-glutamate; N-formimidoyl-L-glutamate from L-histidine: step 2/3. Its function is as follows. Catalyzes the conversion of urocanate to 4-imidazolone-5-propionate. The polypeptide is Urocanate hydratase (Bacillus cereus (strain B4264)).